Here is a 259-residue protein sequence, read N- to C-terminus: Deoxyribose-phosphate aldolase (259 aa).

Asp-102 functions as the Proton donor/acceptor in the catalytic mechanism. The Schiff-base intermediate with acetaldehyde role is filled by Lys-167. The active-site Proton donor/acceptor is Lys-201.

Belongs to the DeoC/FbaB aldolase family. DeoC type 2 subfamily.

It localises to the cytoplasm. It catalyses the reaction 2-deoxy-D-ribose 5-phosphate = D-glyceraldehyde 3-phosphate + acetaldehyde. It functions in the pathway carbohydrate degradation; 2-deoxy-D-ribose 1-phosphate degradation; D-glyceraldehyde 3-phosphate and acetaldehyde from 2-deoxy-alpha-D-ribose 1-phosphate: step 2/2. Functionally, catalyzes a reversible aldol reaction between acetaldehyde and D-glyceraldehyde 3-phosphate to generate 2-deoxy-D-ribose 5-phosphate. The chain is Deoxyribose-phosphate aldolase from Shigella flexneri.